Consider the following 353-residue polypeptide: Phosphate acyltransferase (353 aa).

This sequence belongs to the PlsX family. Homodimer. Probably interacts with PlsY.

It is found in the cytoplasm. The catalysed reaction is a fatty acyl-[ACP] + phosphate = an acyl phosphate + holo-[ACP]. It functions in the pathway lipid metabolism; phospholipid metabolism. Catalyzes the reversible formation of acyl-phosphate (acyl-PO(4)) from acyl-[acyl-carrier-protein] (acyl-ACP). This enzyme utilizes acyl-ACP as fatty acyl donor, but not acyl-CoA. The protein is Phosphate acyltransferase of Agrobacterium fabrum (strain C58 / ATCC 33970) (Agrobacterium tumefaciens (strain C58)).